The primary structure comprises 214 residues: Ribonuclease T (214 aa).

The 176-residue stretch at 20–195 (VVVDVETAGF…YDTQQTAELF (176 aa)) folds into the Exonuclease domain. 4 residues coordinate Mg(2+): Asp-23, Glu-25, His-182, and Asp-187. His-182 acts as the Proton donor/acceptor in catalysis.

The protein belongs to the RNase T family. As to quaternary structure, homodimer. Mg(2+) is required as a cofactor.

Functionally, trims short 3' overhangs of a variety of RNA species, leaving a one or two nucleotide 3' overhang. Responsible for the end-turnover of tRNA: specifically removes the terminal AMP residue from uncharged tRNA (tRNA-C-C-A). Also appears to be involved in tRNA biosynthesis. In Vibrio campbellii (strain ATCC BAA-1116), this protein is Ribonuclease T.